Consider the following 307-residue polypeptide: Aspartate carbamoyltransferase catalytic subunit (307 aa).

Residues Arg-56 and Thr-57 each coordinate carbamoyl phosphate. Lys-84 serves as a coordination point for L-aspartate. Carbamoyl phosphate contacts are provided by Arg-106, His-136, and Gln-139. Residues Arg-169 and Arg-221 each coordinate L-aspartate. Carbamoyl phosphate contacts are provided by Ala-262 and Pro-263.

It belongs to the aspartate/ornithine carbamoyltransferase superfamily. ATCase family. Heterododecamer (2C3:3R2) of six catalytic PyrB chains organized as two trimers (C3), and six regulatory PyrI chains organized as three dimers (R2).

The enzyme catalyses carbamoyl phosphate + L-aspartate = N-carbamoyl-L-aspartate + phosphate + H(+). It participates in pyrimidine metabolism; UMP biosynthesis via de novo pathway; (S)-dihydroorotate from bicarbonate: step 2/3. In terms of biological role, catalyzes the condensation of carbamoyl phosphate and aspartate to form carbamoyl aspartate and inorganic phosphate, the committed step in the de novo pyrimidine nucleotide biosynthesis pathway. The protein is Aspartate carbamoyltransferase catalytic subunit of Streptococcus pneumoniae (strain JJA).